A 234-amino-acid chain; its full sequence is Phosphoribosylaminoimidazole-succinocarboxamide synthase (234 aa).

The protein belongs to the SAICAR synthetase family.

The enzyme catalyses 5-amino-1-(5-phospho-D-ribosyl)imidazole-4-carboxylate + L-aspartate + ATP = (2S)-2-[5-amino-1-(5-phospho-beta-D-ribosyl)imidazole-4-carboxamido]succinate + ADP + phosphate + 2 H(+). It participates in purine metabolism; IMP biosynthesis via de novo pathway; 5-amino-1-(5-phospho-D-ribosyl)imidazole-4-carboxamide from 5-amino-1-(5-phospho-D-ribosyl)imidazole-4-carboxylate: step 1/2. The protein is Phosphoribosylaminoimidazole-succinocarboxamide synthase of Streptococcus pyogenes serotype M18 (strain MGAS8232).